The primary structure comprises 425 residues: Iron-sulfur cluster assembly factor IBA57 homolog, mitochondrial (425 aa).

Residues 1–28 (MPPRLRPGSVCSRCHFHRRSLSSTAFLA) constitute a mitochondrion transit peptide. The interval 403-425 (RQRQTKEDVHRAKSGTEQIEEED) is disordered.

Belongs to the GcvT family. CAF17/IBA57 subfamily.

It is found in the mitochondrion matrix. In Coccidioides immitis (strain RS) (Valley fever fungus), this protein is Iron-sulfur cluster assembly factor IBA57 homolog, mitochondrial (CAF17).